Reading from the N-terminus, the 919-residue chain is Isoleucine--tRNA ligase (919 aa).

The 'HIGH' region motif lies at 57-67 (PYANGHIHIGT). L-isoleucyl-5'-AMP is bound at residue Glu-553. The 'KMSKS' region signature appears at 594–598 (KMSKS). Lys-597 lines the ATP pocket. Zn(2+) is bound by residues Cys-887, Cys-890, Cys-907, and Cys-910.

Belongs to the class-I aminoacyl-tRNA synthetase family. IleS type 1 subfamily. Monomer. It depends on Zn(2+) as a cofactor.

It localises to the cytoplasm. It catalyses the reaction tRNA(Ile) + L-isoleucine + ATP = L-isoleucyl-tRNA(Ile) + AMP + diphosphate. Its function is as follows. Catalyzes the attachment of isoleucine to tRNA(Ile). As IleRS can inadvertently accommodate and process structurally similar amino acids such as valine, to avoid such errors it has two additional distinct tRNA(Ile)-dependent editing activities. One activity is designated as 'pretransfer' editing and involves the hydrolysis of activated Val-AMP. The other activity is designated 'posttransfer' editing and involves deacylation of mischarged Val-tRNA(Ile). The sequence is that of Isoleucine--tRNA ligase from Thermotoga petrophila (strain ATCC BAA-488 / DSM 13995 / JCM 10881 / RKU-1).